The following is a 157-amino-acid chain: Glutamyl-tRNA(Gln) amidotransferase subunit C, mitochondrial (157 aa).

Belongs to the GatC family. Subunit of the heterotrimeric GatCAB amidotransferase (AdT) complex, composed of A, B and C subunits.

The protein resides in the mitochondrion. It carries out the reaction L-glutamyl-tRNA(Gln) + L-glutamine + ATP + H2O = L-glutaminyl-tRNA(Gln) + L-glutamate + ADP + phosphate + H(+). Its function is as follows. Allows the formation of correctly charged Gln-tRNA(Gln) through the transamidation of misacylated Glu-tRNA(Gln) in the mitochondria. The reaction takes place in the presence of glutamine and ATP through an activated gamma-phospho-Glu-tRNA(Gln). In Drosophila virilis (Fruit fly), this protein is Glutamyl-tRNA(Gln) amidotransferase subunit C, mitochondrial.